The sequence spans 469 residues: Ribulose bisphosphate carboxylase large chain (469 aa).

Lysine 8 is subject to N6,N6,N6-trimethyllysine. Substrate is bound by residues asparagine 117 and threonine 167. Residue lysine 169 is the Proton acceptor of the active site. Substrate is bound at residue lysine 171. Lysine 195, aspartate 197, and glutamate 198 together coordinate Mg(2+). Position 195 is an N6-carboxylysine (lysine 195). Histidine 288 functions as the Proton acceptor in the catalytic mechanism. Positions 289, 321, and 373 each coordinate substrate.

The protein belongs to the RuBisCO large chain family. Type I subfamily. As to quaternary structure, heterohexadecamer of 8 large chains and 8 small chains; disulfide-linked. The disulfide link is formed within the large subunit homodimers. It depends on Mg(2+) as a cofactor. Post-translationally, the disulfide bond which can form in the large chain dimeric partners within the hexadecamer appears to be associated with oxidative stress and protein turnover.

The protein resides in the plastid. The protein localises to the chloroplast. The catalysed reaction is 2 (2R)-3-phosphoglycerate + 2 H(+) = D-ribulose 1,5-bisphosphate + CO2 + H2O. It carries out the reaction D-ribulose 1,5-bisphosphate + O2 = 2-phosphoglycolate + (2R)-3-phosphoglycerate + 2 H(+). Functionally, ruBisCO catalyzes two reactions: the carboxylation of D-ribulose 1,5-bisphosphate, the primary event in carbon dioxide fixation, as well as the oxidative fragmentation of the pentose substrate in the photorespiration process. Both reactions occur simultaneously and in competition at the same active site. This Persicaria senticosa (Knotweed) protein is Ribulose bisphosphate carboxylase large chain.